The following is a 562-amino-acid chain: Protein FAM83D-B (562 aa).

The tract at residues 424–472 is disordered; sequence ITTQTTETSQCTTQTPAPTSSVARLSNSSNSSSSSFSSASTTSTGSNCS. Residues 425 to 472 show a composition bias toward low complexity; it reads TTQTTETSQCTTQTPAPTSSVARLSNSSNSSSSSFSSASTTSTGSNCS.

It belongs to the FAM83 family.

Its subcellular location is the cytoplasm. It is found in the cytoskeleton. The protein localises to the spindle. The protein resides in the spindle pole. Functionally, may regulate cell proliferation, growth, migration and epithelial to mesenchymal transition. May also be important for proper chromosome congression and alignment during mitosis. The protein is Protein FAM83D-B of Xenopus laevis (African clawed frog).